The following is a 142-amino-acid chain: SLSDKDKAAVRALWSKIGKSSDAIGNDALSRMIVVYPQTKIYFSHWPDVTPGSPNIKAHGKKVMGGIALAVSKIDDLKTGLMELSEQHAYKLRVDPSNFKILNHCILVVISTMFPKEFTPEAHVSLDKFLSGVALALAERYR.

An N-acetylserine modification is found at Ser-1. The region spanning 1-142 (SLSDKDKAAV…VALALAERYR (142 aa)) is the Globin domain. An O2-binding site is contributed by His-59. His-88 provides a ligand contact to heme b.

The protein belongs to the globin family. Hb1 is a heterotetramer of two alpha-1 chains and two beta chains. HbC is a heterotetramer of two alpha-1 chains and two beta-C chains. As to expression, red blood cells.

Functionally, involved in oxygen transport from gills to the various peripheral tissues. The protein is Hemoglobin subunit alpha-1 (hba1) of Trematomus newnesi (Dusky notothen).